The primary structure comprises 418 residues: Serine protease inhibitor A3M (418 aa).

The signal sequence occupies residues 1 to 20 (MAFIAALGILMAGICPTVLC). 3 N-linked (GlcNAc...) asparagine glycosylation sites follow: N104, N184, and N269. Residues 367 to 392 (GTEAAAATGFIFGFRSRRLQTMTVQF) are RCL.

This sequence belongs to the serpin family. As to expression, expressed in liver and testis.

The protein localises to the secreted. This Mus musculus (Mouse) protein is Serine protease inhibitor A3M (Serpina3m).